The chain runs to 309 residues: Homoserine O-acetyltransferase (309 aa).

Cys-148 acts as the Acyl-thioester intermediate in catalysis. Substrate contacts are provided by Lys-169 and Ser-198. His-241 functions as the Proton acceptor in the catalytic mechanism. Glu-243 is a catalytic residue. Residue Arg-255 coordinates substrate.

It belongs to the MetA family.

The protein localises to the cytoplasm. It carries out the reaction L-homoserine + acetyl-CoA = O-acetyl-L-homoserine + CoA. It functions in the pathway amino-acid biosynthesis; L-methionine biosynthesis via de novo pathway; O-acetyl-L-homoserine from L-homoserine: step 1/1. Its function is as follows. Transfers an acetyl group from acetyl-CoA to L-homoserine, forming acetyl-L-homoserine. In vitro, can also use propionyl-CoA as acyl donor. This chain is Homoserine O-acetyltransferase, found in Shouchella clausii (Alkalihalobacillus clausii).